The following is a 179-amino-acid chain: Large ribosomal subunit protein uL5 (179 aa).

Belongs to the universal ribosomal protein uL5 family. Part of the 50S ribosomal subunit; part of the 5S rRNA/L5/L18/L25 subcomplex. Contacts the 5S rRNA and the P site tRNA. Forms a bridge to the 30S subunit in the 70S ribosome.

Functionally, this is one of the proteins that bind and probably mediate the attachment of the 5S RNA into the large ribosomal subunit, where it forms part of the central protuberance. In the 70S ribosome it contacts protein S13 of the 30S subunit (bridge B1b), connecting the 2 subunits; this bridge is implicated in subunit movement. Contacts the P site tRNA; the 5S rRNA and some of its associated proteins might help stabilize positioning of ribosome-bound tRNAs. The polypeptide is Large ribosomal subunit protein uL5 (Macrococcus caseolyticus (strain JCSC5402) (Macrococcoides caseolyticum)).